The primary structure comprises 156 residues: Small ribosomal subunit protein uS7 (156 aa).

This sequence belongs to the universal ribosomal protein uS7 family. Part of the 30S ribosomal subunit. Contacts proteins S9 and S11.

Functionally, one of the primary rRNA binding proteins, it binds directly to 16S rRNA where it nucleates assembly of the head domain of the 30S subunit. Is located at the subunit interface close to the decoding center, probably blocks exit of the E-site tRNA. The protein is Small ribosomal subunit protein uS7 of Acholeplasma laidlawii (strain PG-8A).